A 164-amino-acid chain; its full sequence is FMN reductase (NADH) RutF (164 aa).

It belongs to the non-flavoprotein flavin reductase family. RutF subfamily.

It catalyses the reaction FMNH2 + NAD(+) = FMN + NADH + 2 H(+). Functionally, catalyzes the reduction of FMN to FMNH2 which is used to reduce pyrimidine by RutA via the Rut pathway. The polypeptide is FMN reductase (NADH) RutF (Klebsiella pneumoniae (strain 342)).